A 156-amino-acid polypeptide reads, in one-letter code: Ribosomal RNA large subunit methyltransferase H (156 aa).

S-adenosyl-L-methionine-binding positions include leucine 73, glycine 104, and 123–128 (ISSMTL).

It belongs to the RNA methyltransferase RlmH family. Homodimer.

It localises to the cytoplasm. The enzyme catalyses pseudouridine(1915) in 23S rRNA + S-adenosyl-L-methionine = N(3)-methylpseudouridine(1915) in 23S rRNA + S-adenosyl-L-homocysteine + H(+). Its function is as follows. Specifically methylates the pseudouridine at position 1915 (m3Psi1915) in 23S rRNA. The protein is Ribosomal RNA large subunit methyltransferase H of Burkholderia ambifaria (strain ATCC BAA-244 / DSM 16087 / CCUG 44356 / LMG 19182 / AMMD) (Burkholderia cepacia (strain AMMD)).